Reading from the N-terminus, the 83-residue chain is MPFQQLLSQLPDQALPVLLAYGALGGAYLLVVPLALLLWMNKRWHQMGKIERTAIYGMVFLFFPGLILFAPFINLRMAGQGEA.

A run of 2 helical transmembrane segments spans residues 17–37 (VLLAYGALGGAYLLVVPLALL) and 53–73 (TAIYGMVFLFFPGLILFAPFI).

It belongs to the complex I NdhL subunit family. As to quaternary structure, NDH-1 can be composed of about 15 different subunits; different subcomplexes with different compositions have been identified which probably have different functions.

It is found in the cellular thylakoid membrane. The catalysed reaction is a plastoquinone + NADH + (n+1) H(+)(in) = a plastoquinol + NAD(+) + n H(+)(out). The enzyme catalyses a plastoquinone + NADPH + (n+1) H(+)(in) = a plastoquinol + NADP(+) + n H(+)(out). Functionally, NDH-1 shuttles electrons from an unknown electron donor, via FMN and iron-sulfur (Fe-S) centers, to quinones in the respiratory and/or the photosynthetic chain. The immediate electron acceptor for the enzyme in this species is believed to be plastoquinone. Couples the redox reaction to proton translocation, and thus conserves the redox energy in a proton gradient. Cyanobacterial NDH-1 also plays a role in inorganic carbon-concentration. The sequence is that of NAD(P)H-quinone oxidoreductase subunit L from Synechococcus sp. (strain RCC307).